The primary structure comprises 314 residues: Dioxygenase easH (314 aa).

Fe cation is bound by residues histidine 141, aspartate 143, and histidine 217.

Belongs to the PhyH family. Homodimer. Fe cation serves as cofactor.

Its pathway is alkaloid biosynthesis; ergot alkaloid biosynthesis. In terms of biological role, dioxygenase; part of the gene cluster that mediates the biosynthesis of fungal ergot alkaloid. DmaW catalyzes the first step of ergot alkaloid biosynthesis by condensing dimethylallyl diphosphate (DMAP) and tryptophan to form 4-dimethylallyl-L-tryptophan. The second step is catalyzed by the methyltransferase easF that methylates 4-dimethylallyl-L-tryptophan in the presence of S-adenosyl-L-methionine, resulting in the formation of 4-dimethylallyl-L-abrine. The catalase easC and the FAD-dependent oxidoreductase easE then transform 4-dimethylallyl-L-abrine to chanoclavine-I which is further oxidized by easD in the presence of NAD(+), resulting in the formation of chanoclavine-I aldehyde. Agroclavine dehydrogenase easG then mediates the conversion of chanoclavine-I aldehyde to agroclavine via a non-enzymatic adduct reaction: the substrate is an iminium intermediate that is formed spontaneously from chanoclavine-I aldehyde in the presence of glutathione. The presence of easA is not required to complete this reaction. Further conversion of agroclavine to paspalic acid is a two-step process involving oxidation of agroclavine to elymoclavine and of elymoclavine to paspalic acid, the second step being performed by the elymoclavine oxidase cloA. Paspalic acid is then further converted to D-lysergic acid. Ergopeptines are assembled from D-lysergic acid and three different amino acids by the D-lysergyl-peptide-synthetases composed each of a monomudular and a trimodular nonribosomal peptide synthetase subunit. LpsB and lpsC encode the monomodular subunits responsible for D-lysergic acid activation and incorporation into the ergopeptine backbone. LpsA1 and A2 subunits encode the trimodular nonribosomal peptide synthetase assembling the tripeptide portion of ergopeptines. LpsA1 is responsible for formation of the major ergopeptine, ergotamine, and lpsA2 for alpha-ergocryptine, the minor ergopeptine of the total alkaloid mixture elaborated by C.purpurea. D-lysergyl-tripeptides are assembled by the nonribosomal peptide synthetases and released as N-(D-lysergyl-aminoacyl)-lactams. Cyclolization of the D-lysergyl-tripeptides is performed by the Fe(2+)/2-ketoglutarate-dependent dioxygenase easH which introduces a hydroxyl group into N-(D-lysergyl-aminoacyl)-lactam at alpha-C of the aminoacyl residue followed by spontaneous condensation with the terminal lactam carbonyl group. The polypeptide is Dioxygenase easH (Claviceps purpurea (strain 20.1) (Ergot fungus)).